We begin with the raw amino-acid sequence, 369 residues long: MPERDPILLTPGPLTTSRMTRDAMLRDWGSWDAAFNRLTKSVCADLVRIAGGGDAYVCVPLQGSGTFAVEATLGTLVPRDARVLVPNNGAYCARIAAILRRLGIAHVELPFAEDEPASAHAIDAALARDARLTHVALVHLETSAGLLNPLDDIAAVCRARGRALIVDAMSSFGALPIALAASGIDALISASGKCLEGVPGMGFAIVRRSALEAAEGRSPSVALDLHDQYAYMQRTSQWRFTPPTHVLAALRAALDQFFDEGGQPARGARYARNCATLVDGMRALGFEPFLDARAQASVIVTFYAPADPAYAFPAFYAAVRDAGYVLYPGKLTTADTFRVGCIGALGADEMRGAVAAIGGALESLGIAMR.

Residue Lys193 is modified to N6-(pyridoxal phosphate)lysine.

Belongs to the class-V pyridoxal-phosphate-dependent aminotransferase family. PhnW subfamily. Homodimer. The cofactor is pyridoxal 5'-phosphate.

The enzyme catalyses (2-aminoethyl)phosphonate + pyruvate = phosphonoacetaldehyde + L-alanine. Involved in phosphonate degradation. This Burkholderia mallei (strain NCTC 10247) protein is 2-aminoethylphosphonate--pyruvate transaminase.